The sequence spans 170 residues: UPF0220 protein C8D2.02c (170 aa).

4 consecutive transmembrane segments (helical) span residues L23–A43, L54–V74, I101–I121, and M136–I156.

This sequence belongs to the UPF0220 family.

Its subcellular location is the membrane. This Schizosaccharomyces pombe (strain 972 / ATCC 24843) (Fission yeast) protein is UPF0220 protein C8D2.02c.